Consider the following 130-residue polypeptide: Small ribosomal subunit protein uS9 (130 aa).

This sequence belongs to the universal ribosomal protein uS9 family.

This chain is Small ribosomal subunit protein uS9, found in Caldicellulosiruptor saccharolyticus (strain ATCC 43494 / DSM 8903 / Tp8T 6331).